A 303-amino-acid polypeptide reads, in one-letter code: Glycine--tRNA ligase alpha subunit (303 aa).

It belongs to the class-II aminoacyl-tRNA synthetase family. Tetramer of two alpha and two beta subunits.

It localises to the cytoplasm. It catalyses the reaction tRNA(Gly) + glycine + ATP = glycyl-tRNA(Gly) + AMP + diphosphate. This chain is Glycine--tRNA ligase alpha subunit, found in Syntrophomonas wolfei subsp. wolfei (strain DSM 2245B / Goettingen).